The primary structure comprises 434 residues: Methylenetetrahydrofolate--tRNA-(uracil-5-)-methyltransferase TrmFO (434 aa).

9–14 (GAGLAG) provides a ligand contact to FAD.

It belongs to the MnmG family. TrmFO subfamily. The cofactor is FAD.

Its subcellular location is the cytoplasm. The enzyme catalyses uridine(54) in tRNA + (6R)-5,10-methylene-5,6,7,8-tetrahydrofolate + NADH + H(+) = 5-methyluridine(54) in tRNA + (6S)-5,6,7,8-tetrahydrofolate + NAD(+). It carries out the reaction uridine(54) in tRNA + (6R)-5,10-methylene-5,6,7,8-tetrahydrofolate + NADPH + H(+) = 5-methyluridine(54) in tRNA + (6S)-5,6,7,8-tetrahydrofolate + NADP(+). In terms of biological role, catalyzes the folate-dependent formation of 5-methyl-uridine at position 54 (M-5-U54) in all tRNAs. The protein is Methylenetetrahydrofolate--tRNA-(uracil-5-)-methyltransferase TrmFO of Listeria innocua serovar 6a (strain ATCC BAA-680 / CLIP 11262).